Here is a 228-residue protein sequence, read N- to C-terminus: UPF0173 metal-dependent hydrolase Smar_0891 (228 aa).

It belongs to the UPF0173 family.

The chain is UPF0173 metal-dependent hydrolase Smar_0891 from Staphylothermus marinus (strain ATCC 43588 / DSM 3639 / JCM 9404 / F1).